The primary structure comprises 184 residues: ATP synthase subunit b, chloroplastic (184 aa).

Residues 27–49 (LATNLINLSVVLGVLIFFGKGVL) traverse the membrane as a helical segment.

The protein belongs to the ATPase B chain family. As to quaternary structure, F-type ATPases have 2 components, F(1) - the catalytic core - and F(0) - the membrane proton channel. F(1) has five subunits: alpha(3), beta(3), gamma(1), delta(1), epsilon(1). F(0) has four main subunits: a(1), b(1), b'(1) and c(10-14). The alpha and beta chains form an alternating ring which encloses part of the gamma chain. F(1) is attached to F(0) by a central stalk formed by the gamma and epsilon chains, while a peripheral stalk is formed by the delta, b and b' chains.

It localises to the plastid. Its subcellular location is the chloroplast thylakoid membrane. Its function is as follows. F(1)F(0) ATP synthase produces ATP from ADP in the presence of a proton or sodium gradient. F-type ATPases consist of two structural domains, F(1) containing the extramembraneous catalytic core and F(0) containing the membrane proton channel, linked together by a central stalk and a peripheral stalk. During catalysis, ATP synthesis in the catalytic domain of F(1) is coupled via a rotary mechanism of the central stalk subunits to proton translocation. Component of the F(0) channel, it forms part of the peripheral stalk, linking F(1) to F(0). This Guizotia abyssinica (Niger) protein is ATP synthase subunit b, chloroplastic.